A 632-amino-acid polypeptide reads, in one-letter code: Arginyl-tRNA--protein transferase 1 (632 aa).

Over residues 1 to 18 (MSLKNDASSSHDGGSNRE) the composition is skewed to polar residues. Disordered stretches follow at residues 1–27 (MSLK…HGRR), 113–144 (KLDV…AKSE), 284–312 (NGNI…HQAR), and 517–580 (PAAS…NDIN). The segment covering 113 to 122 (KLDVQPREQR) has biased composition (basic and acidic residues). A compositionally biased stretch (polar residues) spans 285–296 (GNISRGANSLDG). Positions 298–310 (ETLHAKKDSENHQ) are enriched in basic and acidic residues. A compositionally biased stretch (acidic residues) spans 538-563 (SDEDEDEDEDDDDDDDDDEEMYETES). Residues 564-578 (EDSHIESDPGSKDND) are compositionally biased toward basic and acidic residues.

Belongs to the R-transferase family.

It catalyses the reaction an N-terminal L-alpha-aminoacyl-[protein] + L-arginyl-tRNA(Arg) = an N-terminal L-arginyl-L-aminoacyl-[protein] + tRNA(Arg) + H(+). Involved in the post-translational conjugation of arginine to the N-terminal aspartate or glutamate of a protein. This arginylation is required for degradation of the protein via the ubiquitin pathway. Component of the N-end rule pathway with ATE2 and PRT6. The N-end rule pathway regulates seed after-ripening, seedling sugar sensitivity, seedling lipid breakdown, and abscisic acid (ABA) sensitivity of germination. The end-rule pathway regulates various aspects of leaf and shoot development. Involved in the oxygen-dependent N-arginylation of RAP2-12, an activator of hypoxic gene expression. This N-terminal modification leads to ubiquitination by PRT6 and subsequent degradation of RAP2-12 under aerobic conditions. Has an important role in the progression of leaf senescence. Involved in disease resistance. The end-rule pathway plays a role in regulating the timing and amplitude of the immune response following infection with the bacterial pathogen Pseudomonas syringae pv tomato. Regulates the biosynthesis of plant-defense metabolites such as glucosinolates, and the biosynthesis and response to the phytohormone jasmonate (JA), which plays a key role in plant immunity. The protein is Arginyl-tRNA--protein transferase 1 of Arabidopsis thaliana (Mouse-ear cress).